Reading from the N-terminus, the 734-residue chain is Platelet glycoprotein Ib alpha chain (734 aa).

The signal sequence occupies residues 1-16 (MALLILLFLLPSPLHS). Positions 17–47 (QHTCSISKVTSLLEVNCENKKLTALPADLPA) constitute an LRRNT domain. Topologically, residues 17 to 612 (QHTCSISKVT…LNSDFCCFLP (596 aa)) are extracellular. A disulfide bridge links C20 with C33. LRR repeat units lie at residues 48–69 (DTGILHLGENQLGTFSTASLVH), 72–93 (HLTYLYLDRCELTSLQTNGKLI), 94–115 (KLENLDLSHNNLKSLPSLGWAL), 117–140 (ALTTLDVSFNKLGSLSPGVLDGLS), 141–162 (QLQELYLQNNDLKSLPPGLLLP), 165–188 (KLKKLNLANNKLRELPSGLLDGLE), and 189–210 (DLDTLYLQRNWLRTIPKGFFGT). The LRRCT domain maps to 221–282 (NSWYCDCEIL…YSYPGKGCPT (62 aa)). 2 cysteine pairs are disulfide-bonded: C225–C264 and C227–C280. Y292 carries the post-translational modification Sulfotyrosine. O-linked (GalNAc...) threonine glycosylation is found at T301, T311, T315, and T316. An O-linked (GalNAc...) serine glycan is attached at S335. O-linked (GalNAc...) threonine glycans are attached at residues T339, T348, T358, and T377. Residue S382 is glycosylated (O-linked (GalNAc...) serine). Residues T384, T385, and T405 are each glycosylated (O-linked (GalNAc...) threonine). Disordered regions lie at residues 406–429 (STLTTPEHSTTPVPTTTILTTPEH) and 460–526 (EPST…PEPS). T512, T516, T519, T530, T542, T546, T550, and T562 each carry an O-linked (GalNAc...) threonine glycan. O-linked (GalNAc...) serine glycosylation occurs at S572. O-linked (GalNAc...) threonine glycosylation occurs at T573. The chain crosses the membrane as a helical span at residues 613–633 (LGFYVLGLLWLLFASVVLILL). Residues 634–734 (LTWTWHVTPH…VGIRYSGHSL (101 aa)) lie on the Cytoplasmic side of the membrane. A phosphoserine mark is found at S711 and S714.

Two GP-Ib beta are disulfide-linked to one GP-Ib alpha. GP-IX is complexed with the GP-Ib heterodimer via a non covalent linkage. Interacts with FLNB. Interacts with FLNA (via filamin repeats 4, 9, 12, 17, 19, 21, and 23). O-glycosylated. Post-translationally, glycocalicin is the product of a proteolytic cleavage/shedding, catalyzed by ADAM17, which releases most of the extracellular domain. Binding sites for vWF and thrombin are in this part of the protein.

The protein localises to the membrane. Its function is as follows. GP-Ib, a surface membrane protein of platelets, participates in the formation of platelet plugs by binding to the A1 domain of vWF, which is already bound to the subendothelium. The polypeptide is Platelet glycoprotein Ib alpha chain (Gp1ba) (Mus musculus (Mouse)).